The sequence spans 543 residues: Zinc finger protein 852 (543 aa).

Residues 8–82 enclose the KRAB domain; sequence VAYEDLSEDY…TSGGLFGVVP (75 aa). Residue serine 145 is modified to Phosphoserine. C2H2-type zinc fingers lie at residues 159–181, 187–209, 215–237, 243–265, 271–293, 299–321, 327–349, 355–377, 383–405, 411–433, 439–461, and 467–489; these read YRCD…RRIH, YECN…LRTH, YECS…QRLH, YKCN…QRTH, YECK…QFLH, YKCN…QSLH, YKCS…ERIH, FKCS…QRLH, YKCN…QRIH, YECN…QRTH, and YKCN…QRVH.

Belongs to the krueppel C2H2-type zinc-finger protein family.

It localises to the nucleus. Functionally, may be involved in transcriptional regulation. This is Zinc finger protein 852 (ZNF852) from Homo sapiens (Human).